The primary structure comprises 446 residues: Na(+)-translocating NADH-quinone reductase subunit A (446 aa).

The protein belongs to the NqrA family. In terms of assembly, composed of six subunits; NqrA, NqrB, NqrC, NqrD, NqrE and NqrF.

The catalysed reaction is a ubiquinone + n Na(+)(in) + NADH + H(+) = a ubiquinol + n Na(+)(out) + NAD(+). NQR complex catalyzes the reduction of ubiquinone-1 to ubiquinol by two successive reactions, coupled with the transport of Na(+) ions from the cytoplasm to the periplasm. NqrA to NqrE are probably involved in the second step, the conversion of ubisemiquinone to ubiquinol. This is Na(+)-translocating NADH-quinone reductase subunit A from Histophilus somni (strain 129Pt) (Haemophilus somnus).